The primary structure comprises 620 residues: Glutathione-regulated potassium-efflux system protein KefC (620 aa).

The next 12 membrane-spanning stretches (helical) occupy residues 4–24 (HTLL…PIAV), 26–46 (LGLG…PWGL), 54–74 (SILH…GLEL), 90–110 (GALQ…FLGL), 114–134 (VAEL…MQAM), 149–169 (FAVL…IPLL), 178–198 (LGAF…VVVL), 218–238 (VFSA…EEVG), 270–290 (GLLL…GTLV), 294–314 (LRIL…LWLV), 327–347 (WFAV…GAAQ), and 359–379 (ALTL…VLLT). Positions 399 to 518 (QPRVIVAGFG…AGVAMPERET (120 aa)) constitute an RCK N-terminal domain. Residues 599–620 (QGTAEGKHSGEVADEPEVKPSI) form a disordered region.

The protein belongs to the monovalent cation:proton antiporter 2 (CPA2) transporter (TC 2.A.37) family. KefC subfamily. In terms of assembly, homodimer. Interacts with the regulatory subunit KefF.

It localises to the cell inner membrane. Its function is as follows. Pore-forming subunit of a potassium efflux system that confers protection against electrophiles. Catalyzes K(+)/H(+) antiport. In Salmonella paratyphi B (strain ATCC BAA-1250 / SPB7), this protein is Glutathione-regulated potassium-efflux system protein KefC.